The primary structure comprises 327 residues: T-cell surface glycoprotein CD1a (327 aa).

A signal peptide spans 1 to 16 (MLFLLLPLLAVLPGDG). Residues 17–300 (NADGLKEPLS…VLYWEHHSSV (284 aa)) are Extracellular-facing. 3 N-linked (GlcNAc...) asparagine glycosylation sites follow: N37, N60, and N74. 90-94 (RTIRS) lines the a D-galactosylceramide pocket. Cystine bridges form between C119–C183 and C223–C278. N145 carries N-linked (GlcNAc...) asparagine glycosylation. A D-galactosylceramide is bound by residues E171 and T175. The Ig-like domain occupies 184–291 (PRFILGLLDA…HSSLEGQDIV (108 aa)). Residues 301 to 321 (GFIILAVIVPLLLLIGLALWF) form a helical membrane-spanning segment. The Cytoplasmic segment spans residues 322-327 (RKRCFC).

In terms of assembly, heterodimer with B2M (beta-2-microglobulin). Interacts with CD74. Expressed on cortical thymocytes, epidermal Langerhans cells, dendritic cells, on certain T-cell leukemias, and in various other tissues.

Its subcellular location is the cell membrane. It localises to the membrane raft. It is found in the endosome membrane. Antigen-presenting protein that binds self and non-self lipid and glycolipid antigens and presents them to T-cell receptors on natural killer T-cells. In Homo sapiens (Human), this protein is T-cell surface glycoprotein CD1a (CD1A).